The primary structure comprises 97 residues: MANQKVAPLADRVVVKPLEEAEQMRGGLYIPDTAKEKPQQGTVVAVGPGRFEKETRVPMDVKVGDKILYGKYSGTEVTIEGEALLILRESDVLAVIN.

It belongs to the GroES chaperonin family. Heptamer of 7 subunits arranged in a ring. Interacts with the chaperonin GroEL.

The protein localises to the cytoplasm. Together with the chaperonin GroEL, plays an essential role in assisting protein folding. The GroEL-GroES system forms a nano-cage that allows encapsulation of the non-native substrate proteins and provides a physical environment optimized to promote and accelerate protein folding. GroES binds to the apical surface of the GroEL ring, thereby capping the opening of the GroEL channel. This Gemmatimonas aurantiaca (strain DSM 14586 / JCM 11422 / NBRC 100505 / T-27) protein is Co-chaperonin GroES.